The chain runs to 198 residues: Protein GrpE (198 aa).

Belongs to the GrpE family. In terms of assembly, homodimer.

Its subcellular location is the cytoplasm. Participates actively in the response to hyperosmotic and heat shock by preventing the aggregation of stress-denatured proteins, in association with DnaK and GrpE. It is the nucleotide exchange factor for DnaK and may function as a thermosensor. Unfolded proteins bind initially to DnaJ; upon interaction with the DnaJ-bound protein, DnaK hydrolyzes its bound ATP, resulting in the formation of a stable complex. GrpE releases ADP from DnaK; ATP binding to DnaK triggers the release of the substrate protein, thus completing the reaction cycle. Several rounds of ATP-dependent interactions between DnaJ, DnaK and GrpE are required for fully efficient folding. In Actinobacillus pleuropneumoniae serotype 3 (strain JL03), this protein is Protein GrpE.